Consider the following 293-residue polypeptide: tRNA-cytidine(32) 2-sulfurtransferase (293 aa).

Residues 62–67 (SGGKDS) carry the PP-loop motif motif. C137, C140, and C228 together coordinate [4Fe-4S] cluster.

Belongs to the TtcA family. Homodimer. Mg(2+) serves as cofactor. [4Fe-4S] cluster is required as a cofactor.

The protein resides in the cytoplasm. It carries out the reaction cytidine(32) in tRNA + S-sulfanyl-L-cysteinyl-[cysteine desulfurase] + AH2 + ATP = 2-thiocytidine(32) in tRNA + L-cysteinyl-[cysteine desulfurase] + A + AMP + diphosphate + H(+). Its pathway is tRNA modification. In terms of biological role, catalyzes the ATP-dependent 2-thiolation of cytidine in position 32 of tRNA, to form 2-thiocytidine (s(2)C32). The sulfur atoms are provided by the cysteine/cysteine desulfurase (IscS) system. The polypeptide is tRNA-cytidine(32) 2-sulfurtransferase (Brucella suis (strain ATCC 23445 / NCTC 10510)).